Here is a 510-residue protein sequence, read N- to C-terminus: 2,3-bisphosphoglycerate-independent phosphoglycerate mutase (510 aa).

Mn(2+) is bound at residue aspartate 12. Tyrosine 36 is modified (phosphotyrosine). Serine 62 is a binding site for Mn(2+). Residue serine 62 is the Phosphoserine intermediate of the active site. Residues histidine 123, 153–154 (RD), arginine 185, arginine 191, 261–264 (RPDR), and lysine 336 contribute to the substrate site. Mn(2+) contacts are provided by aspartate 403, histidine 407, aspartate 444, histidine 445, and histidine 462.

Belongs to the BPG-independent phosphoglycerate mutase family. In terms of assembly, monomer. Requires Mn(2+) as cofactor.

It catalyses the reaction (2R)-2-phosphoglycerate = (2R)-3-phosphoglycerate. Its pathway is carbohydrate degradation; glycolysis; pyruvate from D-glyceraldehyde 3-phosphate: step 3/5. Functionally, essential for rapid growth and for sporulation. Catalyzes the interconversion of 2-phosphoglycerate and 3-phosphoglycerate. The chain is 2,3-bisphosphoglycerate-independent phosphoglycerate mutase from Shouchella clausii (strain KSM-K16) (Alkalihalobacillus clausii).